Reading from the N-terminus, the 182-residue chain is Small ribosomal subunit protein uS4c (182 aa).

One can recognise an S4 RNA-binding domain in the interval 82-143 (MRLDNILFRL…KERSKVLIQN (62 aa)).

This sequence belongs to the universal ribosomal protein uS4 family. Part of the 30S ribosomal subunit. Contacts protein S5. The interaction surface between S4 and S5 is involved in control of translational fidelity.

It localises to the plastid. Its subcellular location is the chloroplast. In terms of biological role, one of the primary rRNA binding proteins, it binds directly to 16S rRNA where it nucleates assembly of the body of the 30S subunit. Functionally, with S5 and S12 plays an important role in translational accuracy. This chain is Small ribosomal subunit protein uS4c (rps4), found in Tigridia sp. (strain Lejeune 1997).